The primary structure comprises 149 residues: Protegrin-1 (149 aa).

Positions 1–29 (METQRASLCLGRWSLWLLLLALVVPSASA) are cleaved as a signal peptide. A propeptide spanning residues 30–130 (QALSYREAVL…DITCNEVQGV (101 aa)) is cleaved from the precursor. A disordered region spans residues 61–80 (DQPPKADEDPGTPKPVSFTV). Disulfide bonds link Cys-85–Cys-96, Cys-107–Cys-124, Cys-136–Cys-145, and Cys-138–Cys-143. At Arg-148 the chain carries Arginine amide.

This sequence belongs to the cathelicidin family.

Its subcellular location is the secreted. Microbicidal activity. Active against E.coli, Listeria monocytogenes and C.albicans, in vitro. This chain is Protegrin-1 (NPG1), found in Sus scrofa (Pig).